The primary structure comprises 511 residues: Arabinose import ATP-binding protein AraG (511 aa).

2 ABC transporter domains span residues 5-240 (LEFR…MVGR) and 240-501 (RQID…LRPR). 37 to 44 (GENGAGKS) contacts ATP.

It belongs to the ABC transporter superfamily. Arabinose importer (TC 3.A.1.2.2) family. As to quaternary structure, the complex is composed of two ATP-binding proteins (AraG), two transmembrane proteins (AraH) and a solute-binding protein (AraF).

It is found in the cell inner membrane. The enzyme catalyses L-arabinose(out) + ATP + H2O = L-arabinose(in) + ADP + phosphate + H(+). Functionally, part of the ABC transporter complex AraFGH involved in arabinose import. Responsible for energy coupling to the transport system. This chain is Arabinose import ATP-binding protein AraG, found in Ralstonia nicotianae (strain ATCC BAA-1114 / GMI1000) (Ralstonia solanacearum).